A 202-amino-acid chain; its full sequence is Mevalonate-3-phosphate 5-kinase (202 aa).

It carries out the reaction (R)-3-phosphomevalonate + ATP = (R)-3,5-bisphosphomevalonate + ADP + H(+). It participates in isoprenoid biosynthesis; isopentenyl diphosphate biosynthesis via mevalonate pathway. Phosphorylates mevalonate 3-phosphate to form mevalonate 3,5-bisphosphate. Functions in an alternative mevalonate pathway, only present in extreme acidophiles of the Thermoplasmatales order, which passes through mevalonate 3-phosphate rather than mevalonate 5-phosphate. The polypeptide is Mevalonate-3-phosphate 5-kinase (Thermoplasma acidophilum (strain ATCC 25905 / DSM 1728 / JCM 9062 / NBRC 15155 / AMRC-C165)).